The following is a 64-amino-acid chain: Small ribosomal subunit protein bS21 (64 aa).

The protein belongs to the bacterial ribosomal protein bS21 family.

The polypeptide is Small ribosomal subunit protein bS21 (Pelagibacter ubique (strain HTCC1062)).